The primary structure comprises 168 residues: CASP-like protein UU-1 (168 aa).

Over 1-17 the chain is Cytoplasmic; sequence MVELESQEAVTVASTAD. Residues 18 to 38 traverse the membrane as a helical segment; that stretch reads IAVDVSLRLLAAATSLAAAVV. Residues 39-54 are Extracellular-facing; it reads VAANHQQRWGIRVDFT. Residues 55–75 form a helical membrane-spanning segment; that stretch reads LFQVWIGFVAVNLVCTVYAAA. Topologically, residues 76-95 are cytoplasmic; sequence TAAAAARKAMGRWWLHHADA. A helical transmembrane segment spans residues 96–116; that stretch reads VVVNLEAAATAGAGAIGSIAM. Residues 117-136 lie on the Extracellular side of the membrane; sequence WGNEASGWYAVCRLYRRYCN. Residues 137 to 157 traverse the membrane as a helical segment; sequence AGAAALALSLAAVLLLGVACA. Topologically, residues 158-168 are cytoplasmic; it reads RSRYPKMPPTT.

This sequence belongs to the Casparian strip membrane proteins (CASP) family. Homodimer and heterodimers.

The protein localises to the cell membrane. The chain is CASP-like protein UU-1 from Oryza sativa subsp. japonica (Rice).